The following is a 452-amino-acid chain: Bis(5'-adenosyl)-triphosphatase ENPP4 (452 aa).

The first 15 residues, 1-15 (MKLLVILLFSGLITG), serve as a signal peptide directing secretion. Residues 16–406 (FRSDSSSSLP…DQWCINLPEA (391 aa)) lie on the Extracellular side of the membrane. 2 residues coordinate Zn(2+): aspartate 34 and threonine 70. The active-site AMP-threonine intermediate is the threonine 70. Substrate is bound by residues asparagine 91 and tyrosine 154. Asparagine 155 and asparagine 166 each carry an N-linked (GlcNAc...) asparagine glycan. Zn(2+) is bound by residues aspartate 189, histidine 193, aspartate 237, and histidine 238. Aspartate 189 contributes to the substrate binding site. A disulfide bridge links cysteine 254 with cysteine 287. N-linked (GlcNAc...) asparagine glycosylation occurs at asparagine 276. Histidine 335 contacts Zn(2+). The cysteines at positions 393 and 400 are disulfide-linked. A helical membrane pass occupies residues 407-427 (IAIVIGSLLVLTMLTCLIIIM). The Cytoplasmic portion of the chain corresponds to 428–452 (QNRLSVPRPFSRLQLQEDDDDPLIG).

The protein belongs to the nucleotide pyrophosphatase/phosphodiesterase family. It depends on Zn(2+) as a cofactor.

It is found in the cell membrane. It carries out the reaction P(1),P(3)-bis(5'-adenosyl) triphosphate + H2O = AMP + ADP + 2 H(+). Functionally, hydrolyzes extracellular Ap3A into AMP and ADP, and Ap4A into AMP and ATP. Ap3A and Ap4A are diadenosine polyphosphates thought to induce proliferation of vascular smooth muscle cells. Acts as a procoagulant, mediating platelet aggregation at the site of nascent thrombus via release of ADP from Ap3A and activation of ADP receptors. This chain is Bis(5'-adenosyl)-triphosphatase ENPP4 (ENPP4), found in Pongo abelii (Sumatran orangutan).